The chain runs to 201 residues: MRLLPLLRTVLWAAFLGSPLRGGSSLRHVVYWNSSNPRLLRGDAVVELGLNDYLDIVCPHYEGPGPPEGPETFALYMVDWPGYESCQAEGPRAYKRWVCSLPFGHVQFSEKIQRFTPFSLGFEFLPGETYYYISVPTPESSGQCLRLQVSVCCKERKSESAHPVGSPGESGTSGWRGGDTPSPLCLLLLLLLLILRLLRIL.

An N-terminal signal peptide occupies residues 1-25 (MRLLPLLRTVLWAAFLGSPLRGGSS). The Ephrin RBD domain occupies 26–155 (LRHVVYWNSS…RLQVSVCCKE (130 aa)). Asn-33 is a glycosylation site (N-linked (GlcNAc...) asparagine). Disulfide bonds link Cys-58/Cys-99 and Cys-86/Cys-144. A lipid anchor (GPI-anchor amidated serine) is attached at Ser-170. A propeptide spans 171–201 (GTSGWRGGDTPSPLCLLLLLLLLILRLLRIL) (removed in mature form).

Belongs to the ephrin family. As to expression, expressed in the adult spleen, lymph node, prostate, ovary, small intestine, and colon, and in fetal heart, lung, liver and kidney. Also detected in hematopoietic cell lines.

The protein localises to the cell membrane. It is found in the secreted. In terms of biological role, cell surface GPI-bound ligand for Eph receptors, a family of receptor tyrosine kinases which are crucial for migration, repulsion and adhesion during neuronal, vascular and epithelial development. Binds promiscuously Eph receptors residing on adjacent cells, leading to contact-dependent bidirectional signaling into neighboring cells. May play a role in the interaction between activated B-lymphocytes and dendritic cells in tonsils. This is Ephrin-A4 (EFNA4) from Homo sapiens (Human).